Here is a 467-residue protein sequence, read N- to C-terminus: UDP-N-acetylmuramate--L-alanine ligase (467 aa).

Position 114 to 120 (114 to 120 (GTHGKTT)) interacts with ATP.

The protein belongs to the MurCDEF family.

Its subcellular location is the cytoplasm. It carries out the reaction UDP-N-acetyl-alpha-D-muramate + L-alanine + ATP = UDP-N-acetyl-alpha-D-muramoyl-L-alanine + ADP + phosphate + H(+). It functions in the pathway cell wall biogenesis; peptidoglycan biosynthesis. Functionally, cell wall formation. This is UDP-N-acetylmuramate--L-alanine ligase from Bradyrhizobium diazoefficiens (strain JCM 10833 / BCRC 13528 / IAM 13628 / NBRC 14792 / USDA 110).